We begin with the raw amino-acid sequence, 393 residues long: Ornithine decarboxylase 2 (393 aa).

Lysine 62 is modified (N6-(pyridoxal phosphate)lysine). Residues serine 194, glycine 231, and 265–268 contribute to the pyridoxal 5'-phosphate site; that span reads EPGR. A substrate-binding site is contributed by 314–315; the sequence is YY. Catalysis depends on cysteine 343, which acts as the Proton donor; shared with dimeric partner. Residue aspartate 344 participates in substrate binding. Residue tyrosine 371 coordinates pyridoxal 5'-phosphate.

This sequence belongs to the Orn/Lys/Arg decarboxylase class-II family. Homodimer. Only the dimer is catalytically active, as the active sites are constructed of residues from both monomers. The cofactor is pyridoxal 5'-phosphate.

The enzyme catalyses L-ornithine + H(+) = putrescine + CO2. It participates in amine and polyamine biosynthesis; putrescine biosynthesis via L-ornithine pathway; putrescine from L-ornithine: step 1/1. Inhibited by antizyme (AZ) in response to polyamine levels. AZ inhibits the assembly of the functional homodimer by binding to ODC monomers and targeting them for ubiquitin-independent proteolytic destruction by the 26S proteasome. Functionally, catalyzes the first and rate-limiting step of polyamine biosynthesis that converts ornithine into putrescine, which is the precursor for the polyamines, spermidine and spermine. Polyamines are essential for cell proliferation and are implicated in cellular processes, ranging from DNA replication to apoptosis. In Drosophila melanogaster (Fruit fly), this protein is Ornithine decarboxylase 2 (Odc2).